The sequence spans 508 residues: Protein disulfide-isomerase (508 aa).

The first 17 residues, 1–17 (MLRRALLCLAVAALVRA), serve as a signal peptide directing secretion. Residues 18 to 134 (DAPEEEDHVL…IVNWLKKRTG (117 aa)) form the Thioredoxin 1 domain. Active-site nucleophile residues include Cys-53 and Cys-56. An intrachain disulfide couples Cys-53 to Cys-56. Position 200 is an N6-acetyllysine (Lys-200). Lys-222 and Lys-271 each carry N6-succinyllysine. Ser-331 bears the Phosphoserine mark. One can recognise a Thioredoxin 2 domain in the interval 349 to 475 (GKIKPHLMSQ…FKKFLESGGQ (127 aa)). Phosphoserine; by FAM20C is present on Ser-357. Active-site nucleophile residues include Cys-397 and Cys-400. Cysteines 397 and 400 form a disulfide. Residue Ser-427 is modified to Phosphoserine. The segment at 471–508 (ESGGQDGAGDDDDLEDLEEAEEPDMEEDDDQKAVKDEL) is disordered. Residues 478–500 (AGDDDDLEDLEEAEEPDMEEDDD) show a composition bias toward acidic residues. The short motif at 505–508 (KDEL) is the Prevents secretion from ER element.

This sequence belongs to the protein disulfide isomerase family. As to quaternary structure, heterodimer; heterodimerizes with the protein microsomal triglyceride transfer MTTP. Homodimer. Monomers and homotetramers may also occur. Interacts with P4HA2, forming a heterotetramer consisting of 2 alpha subunits (P4HA2) and 2 beta (P4HB), where P4HB plays the role of a structural subunit; this tetramer catalyzes the formation of 4-hydroxyproline in collagen. Also constitutes the structural subunit of the microsomal triacylglycerol transfer protein MTTP in mammalian cells. Stabilizes both enzymes and retain them in the ER without contributing to the catalytic activity. Binds UBQLN1. Interacts with ERO1B. Binds to CD4, and upon HIV-1 binding to the cell membrane, is part of a P4HB/PDI-CD4-CXCR4-gp120 complex. Interacts with ILDR2. Interacts with ERN1/IRE1A (via N-terminus); the interaction is enhanced by phosphorylation of P4HB by FAM20C in response to endoplasmic reticulum stress and results in attenuation of ERN1 activity. Phosphorylation of Ser-357 by FAM20C is induced by endoplasmic reticulum stress and results in a functional switch from oxidoreductase to molecular chaperone. It also promotes interaction with ERN1.

It is found in the endoplasmic reticulum. The protein resides in the endoplasmic reticulum lumen. Its subcellular location is the melanosome. It localises to the cell membrane. It catalyses the reaction Catalyzes the rearrangement of -S-S- bonds in proteins.. Its function is as follows. This multifunctional protein catalyzes the formation, breakage and rearrangement of disulfide bonds. At the cell surface, seems to act as a reductase that cleaves disulfide bonds of proteins attached to the cell. May therefore cause structural modifications of exofacial proteins. Inside the cell, seems to form/rearrange disulfide bonds of nascent proteins. At high concentrations and following phosphorylation by FAM20C, functions as a chaperone that inhibits aggregation of misfolded proteins. At low concentrations, facilitates aggregation (anti-chaperone activity). May be involved with other chaperones in the structural modification of the TG precursor in hormone biogenesis. Also acts as a structural subunit of various enzymes such as prolyl 4-hydroxylase and microsomal triacylglycerol transfer protein MTTP. Receptor for LGALS9; the interaction retains P4HB at the cell surface of Th2 T helper cells, increasing disulfide reductase activity at the plasma membrane, altering the plasma membrane redox state and enhancing cell migration. The polypeptide is Protein disulfide-isomerase (P4HB) (Homo sapiens (Human)).